The following is a 184-amino-acid chain: MARLEVPRPATFVTLTGFMGVGKSRIGRELARALMLHFIDLDRYIERRTGISIPDIFRHLGEEAFRRMEKEAVRELVGKDYLVLSLGGGTFMDPESQKALLGRGPVVALWASPETILERAMRKPGERPLLQVENPLERIRTLLEARAPIYRKAHIHVSTDGRRVEEVVEEIVEKLWRHAEARGA.

An ATP-binding site is contributed by 20–25 (GVGKSR). Ser-24 is a Mg(2+) binding site. Substrate-binding residues include Asp-42, Arg-66, and Gly-88. Position 127 (Arg-127) interacts with ATP. Arg-146 serves as a coordination point for substrate. Arg-162 provides a ligand contact to ATP.

The protein belongs to the shikimate kinase family. Monomer. The cofactor is Mg(2+).

The protein localises to the cytoplasm. The enzyme catalyses shikimate + ATP = 3-phosphoshikimate + ADP + H(+). It functions in the pathway metabolic intermediate biosynthesis; chorismate biosynthesis; chorismate from D-erythrose 4-phosphate and phosphoenolpyruvate: step 5/7. Its function is as follows. Catalyzes the specific phosphorylation of the 3-hydroxyl group of shikimic acid using ATP as a cosubstrate. In Thermus thermophilus (strain ATCC BAA-163 / DSM 7039 / HB27), this protein is Shikimate kinase.